A 1792-amino-acid chain; its full sequence is BTB/POZ domain-containing protein 8 (1792 aa).

BTB domains lie at Thr-58–Asn-127 and Pro-206–Asp-273. Disordered stretches follow at residues Asp-528–Gly-554, Ser-581–Val-658, Thr-670–Arg-692, Lys-707–Pro-768, Ser-788–Val-815, Ala-831–Lys-989, Glu-1151–Arg-1283, and Ser-1519–Asp-1607. 2 stretches are compositionally biased toward polar residues: residues Phe-541 to Asp-552 and Gly-588 to Thr-601. 2 stretches are compositionally biased toward basic and acidic residues: residues Leu-602–Thr-625 and Ser-640–Leu-650. Positions Gly-724–Thr-740 are enriched in polar residues. The span at Asp-744 to Ser-758 shows a compositional bias: basic and acidic residues. Residues Thr-838 to Glu-865 show a composition bias toward polar residues. Positions Ser-866 to Arg-877 are enriched in low complexity. Composition is skewed to basic and acidic residues over residues Gln-878 to Thr-891 and Lys-927 to Gln-939. Positions Ile-947–Arg-956 are enriched in polar residues. The span at Met-969–Pro-987 shows a compositional bias: basic and acidic residues. 2 stretches are compositionally biased toward polar residues: residues Glu-1151–Ala-1160 and Ser-1195–Met-1215. Low complexity predominate over residues Ser-1250–Ser-1259. A compositionally biased stretch (basic and acidic residues) spans Ile-1566–Asn-1594. Positions Ile-1597–Asp-1607 are enriched in polar residues.

Interacts (via N-terminus) with adapter protein complex AP-2 subunits alpha (AP2A1) and beta (AP2B1). Highly expressed in fetal brain. Weakly expressed in adult brain and prostate.

The protein resides in the cell projection. The protein localises to the axon. Its subcellular location is the presynapse. It localises to the cytoplasmic vesicle. It is found in the clathrin-coated vesicle. The protein resides in the nucleus. In terms of biological role, involved in clathrin-mediated endocytosis at the synapse. Plays a role in neuronal development and in synaptic vesicle recycling in mature neurons, a process required for normal synaptic transmission. In Homo sapiens (Human), this protein is BTB/POZ domain-containing protein 8.